The chain runs to 446 residues: D-inositol 3-phosphate glycosyltransferase (446 aa).

The tract at residues 1 to 21 is disordered; sequence MSHYVGRLGRRSPAGSGRLRL. His34 is a binding site for 1D-myo-inositol 3-phosphate. UDP-N-acetyl-alpha-D-glucosamine contacts are provided by residues 40-41 and Gly48; that span reads QP. Residues 45–50, Lys103, Tyr136, Thr160, and Arg180 contribute to the 1D-myo-inositol 3-phosphate site; that span reads DAGGMN. 3 residues coordinate UDP-N-acetyl-alpha-D-glucosamine: Arg255, Lys260, and Val321. Phe330, Arg331, and Ala333 together coordinate Mg(2+). The UDP-N-acetyl-alpha-D-glucosamine site is built by Glu343 and Glu351. Residue Thr357 participates in Mg(2+) binding.

It belongs to the glycosyltransferase group 1 family. MshA subfamily. In terms of assembly, homodimer.

The catalysed reaction is 1D-myo-inositol 3-phosphate + UDP-N-acetyl-alpha-D-glucosamine = 1D-myo-inositol 2-acetamido-2-deoxy-alpha-D-glucopyranoside 3-phosphate + UDP + H(+). Catalyzes the transfer of a N-acetyl-glucosamine moiety to 1D-myo-inositol 3-phosphate to produce 1D-myo-inositol 2-acetamido-2-deoxy-glucopyranoside 3-phosphate in the mycothiol biosynthesis pathway. The chain is D-inositol 3-phosphate glycosyltransferase from Streptomyces scabiei (strain 87.22).